The chain runs to 137 residues: Leaf-specific thionin (137 aa).

Positions 1–28 (MATNKSIKSVVICVLILGLVLEQVQVEA) are cleaved as a signal peptide. Cystine bridges form between cysteine 31–cysteine 68, cysteine 32–cysteine 60, cysteine 40–cysteine 58, and cysteine 44–cysteine 54. A propeptide spans 75-137 (LNLLPESGEP…DGEVIQSVEA (63 aa)) (acidic domain).

The protein belongs to the plant thionin (TC 1.C.44) family. 4 C-C subfamily.

The protein resides in the secreted. Thionins are small plant proteins which are toxic to animal cells. They seem to exert their toxic effect at the level of the cell membrane. Their precise function is not known. The sequence is that of Leaf-specific thionin (THI1.5) from Hordeum vulgare (Barley).